The following is a 1051-amino-acid chain: Lateral signaling target protein 2 homolog (1051 aa).

4 disordered regions span residues 305-440 (PLGS…DEDL), 516-552 (GSNAATERQQQQQHMDELQPGDQQQQQQQLQDEPSTS), 566-703 (HLPS…NASS), and 837-968 (IDLA…DGKA). A compositionally biased stretch (low complexity) spans 319–358 (NNTSSSTSNNNNNNNNNSSSSSSSSSGSGSNTAKTSTSST). A compositionally biased stretch (basic and acidic residues) spans 360–370 (KAVERLVDHRN). A compositionally biased stretch (polar residues) spans 371-391 (NNSSTVAGATQPSTARSPSML). Low complexity-rich tracts occupy residues 392 to 401 (SLSAGSTPTA) and 409 to 428 (PSHSIASTSSAATTSTNPPA). A compositionally biased stretch (polar residues) spans 518–528 (NAATERQQQQQ). Low complexity-rich tracts occupy residues 533-549 (LQPGDQQQQQQQLQDEP) and 568-582 (PSSSSENEQAPSSNQ). A phosphoserine mark is found at Ser569 and Ser570. Residues 583 to 596 (QTTIKTPNGNQSMP) show a composition bias toward polar residues. Residues 597–606 (NSSSSSSNHN) are compositionally biased toward low complexity. 2 stretches are compositionally biased toward basic residues: residues 607-637 (NNRHRHSHSHSHSSHHHHHHHRHHHHTHPHH) and 650-672 (HHHHHHHHHQSHPHRINRSARKR). Positions 692–703 (TPGSADTSNASS) are enriched in polar residues. Positions 840 to 852 (ASGNNNGNSNAAA) are enriched in low complexity. Ser861 carries the post-translational modification Phosphoserine. Composition is skewed to low complexity over residues 879–924 (QQQQ…SPIS) and 937–960 (SSIGTTSTITPSTAAATATTMSPP). The FYVE-type zinc-finger motif lies at 965–1025 (DGKAPRCMSC…VCRECYVREV (61 aa)). Zn(2+)-binding residues include Cys971, Cys974, Cys987, Cys990, Cys995, Cys998, Cys1017, and Cys1020. The tract at residues 1028–1051 (SRQAPAQPSQAHGQASRPQAASAS) is disordered.

This sequence belongs to the lst-2 family.

Functionally, negative regulator of epidermal growth factor receptor (EGFR) signaling. The chain is Lateral signaling target protein 2 homolog from Drosophila mojavensis (Fruit fly).